An 840-amino-acid chain; its full sequence is Probable inorganic carbon transporter subunit DabA 2 (840 aa).

Residues cysteine 356, aspartate 358, histidine 540, and cysteine 555 each contribute to the Zn(2+) site.

Belongs to the inorganic carbon transporter (TC 9.A.2) DabA family. Forms a complex with DabB. The cofactor is Zn(2+).

The protein localises to the cell inner membrane. Its function is as follows. Part of an energy-coupled inorganic carbon pump. The polypeptide is Probable inorganic carbon transporter subunit DabA 2 (Bradyrhizobium sp. (strain ORS 278)).